The following is a 441-amino-acid chain: Protein eva-1 homolog C (441 aa).

The disordered stretch occupies residues 1 to 23; sequence MLLPGRARQPPTPQPVQHPGLRR. The signal sequence occupies residues 1–48; that stretch reads MLLPGRARQPPTPQPVQHPGLRRQVEPPGQLLRLFYCTVLVCSKEISA. Over 49–322 the chain is Extracellular; the sequence is LTDFSGYLTK…AYIRAHPERA (274 aa). N-linked (GlcNAc...) asparagine glycosylation is present at N62. Positions 67 to 159 constitute an SUEL-type lectin 1 domain; that stretch reads ACDGDYLNLQ…KYLLVSFKCQ (93 aa). Residue N165 is glycosylated (N-linked (GlcNAc...) asparagine). The SUEL-type lectin 2 domain maps to 168 to 260; it reads VCEDQELKLH…KYLTVTYACV (93 aa). Residues 323–343 form a helical membrane-spanning segment; the sequence is ALLFVSSVCIGLALTLCALVI. The Cytoplasmic portion of the chain corresponds to 344–441; sequence RESCAKDFRD…SLPRNMGQFY (98 aa). The disordered stretch occupies residues 362–390; sequence VPGSDKVEEDSEDEEEEEDPSESDFPGEL. Positions 368-383 are enriched in acidic residues; the sequence is VEEDSEDEEEEEDPSE.

It belongs to the EVA1 family. As to expression, ubiquitous.

Its subcellular location is the membrane. Functionally, binds heparin. This is Protein eva-1 homolog C (EVA1C) from Homo sapiens (Human).